Here is a 499-residue protein sequence, read N- to C-terminus: Tetrathionate hydrolase (499 aa).

A signal peptide spans M1–A32.

The protein belongs to the tetrathionate hydrolase family. Homodimer.

Its subcellular location is the cell membrane. The catalysed reaction is tetrathionate + H2O = sulfur + thiosulfate + sulfate + H(+). Catalyzes the hydrolysis of tetrathionate to generate elemental sulfur, thiosulfate and sulfate. This chain is Tetrathionate hydrolase, found in Acidithiobacillus ferrooxidans (strain ATCC 23270 / DSM 14882 / CIP 104768 / NCIMB 8455) (Ferrobacillus ferrooxidans (strain ATCC 23270)).